Reading from the N-terminus, the 321-residue chain is Phospho-N-acetylmuramoyl-pentapeptide-transferase (321 aa).

The next 10 membrane-spanning stretches (helical) occupy residues 1 to 21 (MIFV…PVLI), 50 to 70 (MGGL…IIFV), 76 to 96 (IILL…DDYI), 112 to 132 (FLAQ…FHLV), 140 to 160 (IPFT…IVFW), 176 to 196 (GLAT…SFVL), 200 to 220 (AIGI…PYNI), 225 to 245 (VFMG…ISIM), 250 to 270 (LSLI…MLQV), and 300 to 320 (VVTV…WIGV).

Belongs to the glycosyltransferase 4 family. MraY subfamily. It depends on Mg(2+) as a cofactor.

Its subcellular location is the cell membrane. The enzyme catalyses UDP-N-acetyl-alpha-D-muramoyl-L-alanyl-gamma-D-glutamyl-L-lysyl-D-alanyl-D-alanine + di-trans,octa-cis-undecaprenyl phosphate = Mur2Ac(oyl-L-Ala-gamma-D-Glu-L-Lys-D-Ala-D-Ala)-di-trans,octa-cis-undecaprenyl diphosphate + UMP. It participates in cell wall biogenesis; peptidoglycan biosynthesis. Its function is as follows. Catalyzes the initial step of the lipid cycle reactions in the biosynthesis of the cell wall peptidoglycan: transfers peptidoglycan precursor phospho-MurNAc-pentapeptide from UDP-MurNAc-pentapeptide onto the lipid carrier undecaprenyl phosphate, yielding undecaprenyl-pyrophosphoryl-MurNAc-pentapeptide, known as lipid I. The protein is Phospho-N-acetylmuramoyl-pentapeptide-transferase of Staphylococcus aureus (strain Mu50 / ATCC 700699).